Here is a 481-residue protein sequence, read N- to C-terminus: Tagaturonate/fructuronate epimerase (481 aa).

The Proton acceptor role is filled by D161. H162 is an a divalent metal cation binding site. The active-site Proton donor is E266. A divalent metal cation-binding residues include K308 and H341.

Belongs to the UxaE family. A divalent metal cation is required as a cofactor.

It catalyses the reaction keto-D-tagaturonate = keto-D-fructuronate. Catalyzes the epimerization of D-tagaturonate (D-TagA) to D-fructuronate (D-FruA). The sequence is that of Tagaturonate/fructuronate epimerase from Thermotoga maritima (strain ATCC 43589 / DSM 3109 / JCM 10099 / NBRC 100826 / MSB8).